A 256-amino-acid polypeptide reads, in one-letter code: Thiazole synthase (256 aa).

Lys-95 (schiff-base intermediate with DXP) is an active-site residue. Residues Gly-156, 182–183 (AG), and 204–205 (NT) contribute to the 1-deoxy-D-xylulose 5-phosphate site.

Belongs to the ThiG family. Homotetramer. Forms heterodimers with either ThiH or ThiS.

Its subcellular location is the cytoplasm. It carries out the reaction [ThiS sulfur-carrier protein]-C-terminal-Gly-aminoethanethioate + 2-iminoacetate + 1-deoxy-D-xylulose 5-phosphate = [ThiS sulfur-carrier protein]-C-terminal Gly-Gly + 2-[(2R,5Z)-2-carboxy-4-methylthiazol-5(2H)-ylidene]ethyl phosphate + 2 H2O + H(+). It functions in the pathway cofactor biosynthesis; thiamine diphosphate biosynthesis. In terms of biological role, catalyzes the rearrangement of 1-deoxy-D-xylulose 5-phosphate (DXP) to produce the thiazole phosphate moiety of thiamine. Sulfur is provided by the thiocarboxylate moiety of the carrier protein ThiS. In vitro, sulfur can be provided by H(2)S. The chain is Thiazole synthase from Escherichia coli O81 (strain ED1a).